The primary structure comprises 366 residues: D-alanine--D-alanine ligase (366 aa).

One can recognise an ATP-grasp domain in the interval K145–E348. V175–E230 lines the ATP pocket. Residues D302, E315, and N317 each coordinate Mg(2+).

It belongs to the D-alanine--D-alanine ligase family. It depends on Mg(2+) as a cofactor. Mn(2+) serves as cofactor.

It localises to the cytoplasm. The enzyme catalyses 2 D-alanine + ATP = D-alanyl-D-alanine + ADP + phosphate + H(+). It participates in cell wall biogenesis; peptidoglycan biosynthesis. Its function is as follows. Cell wall formation. In Proteus mirabilis (strain HI4320), this protein is D-alanine--D-alanine ligase.